The sequence spans 200 residues: CASP-like protein 1U2 (200 aa).

The Cytoplasmic portion of the chain corresponds to 1–33; sequence MAEPVIVVPRKGVYSDDSYHHHHRHHSFHSCTN. The helical transmembrane segment at 34–54 threads the bilayer; the sequence is FLLRTLTAGATAAAVVVMLIS. The Extracellular portion of the chain corresponds to 55 to 77; that stretch reads TQTSGTIYGYFRGRWRDYPAYKW. The chain crosses the membrane as a helical span at residues 78-98; sequence LIIANAVVFVYSVMAAIVACF. The Cytoplasmic segment spans residues 99–120; the sequence is SVIARRGPLSYSPSAWLTLLVD. The helical transmembrane segment at 121–141 threads the bilayer; it reads FLAASALISAASAALAVALLA. At 142 to 168 the chain is on the extracellular side; the sequence is RNGQDLQGTHYWPTVCNYVSKFCDYTQ. A helical membrane pass occupies residues 169-189; sequence GAIIASFVGFGLLFLSTLLAA. Residues 190 to 200 are Cytoplasmic-facing; the sequence is SALYHLSHRRH.

The protein belongs to the Casparian strip membrane proteins (CASP) family. As to quaternary structure, homodimer and heterodimers.

Its subcellular location is the cell membrane. This Physcomitrium patens (Spreading-leaved earth moss) protein is CASP-like protein 1U2.